Reading from the N-terminus, the 159-residue chain is uncharacterized protein (159 aa).

The region spanning Leu6–Thr66 is the HTH asnC-type domain. The segment at residues Asp25–Ile44 is a DNA-binding region (H-T-H motif).

This is an uncharacterized protein from Pyrococcus horikoshii (strain ATCC 700860 / DSM 12428 / JCM 9974 / NBRC 100139 / OT-3).